Consider the following 336-residue polypeptide: UDP-N-acetylglucosamine--N-acetylmuramyl-(pentapeptide) pyrophosphoryl-undecaprenol N-acetylglucosamine transferase (336 aa).

The UDP-N-acetyl-alpha-D-glucosamine site is built by asparagine 102, arginine 144, serine 172, and glutamine 264.

This sequence belongs to the glycosyltransferase 28 family. MurG subfamily.

The protein localises to the cell membrane. It carries out the reaction di-trans,octa-cis-undecaprenyl diphospho-N-acetyl-alpha-D-muramoyl-L-alanyl-D-glutamyl-meso-2,6-diaminopimeloyl-D-alanyl-D-alanine + UDP-N-acetyl-alpha-D-glucosamine = di-trans,octa-cis-undecaprenyl diphospho-[N-acetyl-alpha-D-glucosaminyl-(1-&gt;4)]-N-acetyl-alpha-D-muramoyl-L-alanyl-D-glutamyl-meso-2,6-diaminopimeloyl-D-alanyl-D-alanine + UDP + H(+). Its pathway is cell wall biogenesis; peptidoglycan biosynthesis. Cell wall formation. Catalyzes the transfer of a GlcNAc subunit on undecaprenyl-pyrophosphoryl-MurNAc-pentapeptide (lipid intermediate I) to form undecaprenyl-pyrophosphoryl-MurNAc-(pentapeptide)GlcNAc (lipid intermediate II). The polypeptide is UDP-N-acetylglucosamine--N-acetylmuramyl-(pentapeptide) pyrophosphoryl-undecaprenol N-acetylglucosamine transferase (Rubrobacter xylanophilus (strain DSM 9941 / JCM 11954 / NBRC 16129 / PRD-1)).